Consider the following 1133-residue polypeptide: Guanine nucleotide-binding protein G(s) subunit alpha isoforms XLas (1133 aa).

4 disordered regions span residues 1–195, 322–552, 611–648, and 724–744; these read MGMF…PEAL, DDTA…VPGA, SASA…WPDK, and RSRS…RKQM. The segment covering 31 to 48 has biased composition (low complexity); that stretch reads LEAPGAAAPGAGAGPAEE. The segment covering 347-362 has biased composition (basic and acidic residues); the sequence is DKSECAERPPVEREAA. Low complexity-rich tracts occupy residues 391–404, 459–471, 482–498, 515–525, and 535–552; these read PEAM…AAQA, GGAA…TPAE, AEPA…ESAS, ATLAEPAARAA, and RAVP…VPGA. Pro residues predominate over residues 633–643; the sequence is PPTPRPPPRPT. The segment covering 732-744 has biased composition (basic and acidic residues); that stretch reads KAKDPMEERRKQM. Residues 737–761 adopt a coiled-coil conformation; it reads MEERRKQMRKEAIEMREQKRADKKR. Residues 778–1133 form the G-alpha domain; that stretch reads CTHRLLLLGA…RMHLRQYELL (356 aa). The tract at residues 781–794 is G1 motif; the sequence is RLLLLGAGESGKST. 786-794 is a GTP binding site; the sequence is GAGESGKST. S793 provides a ligand contact to Mg(2+). A disordered region spans residues 807 to 828; it reads FNGEGGEEDPQAARSNSDGEKA. The interval 935–943 is G2 motif; it reads DLLRCRVLT. Residues 936–943, 962–966, and 1031–1034 each bind GTP; these read LLRCRVLT, DVGGQ, and NKQD. R940 is subject to ADP-ribosylarginine; by cholera toxin. T943 provides a ligand contact to Mg(2+). The tract at residues 958 to 967 is G3 motif; it reads FHMFDVGGQR. The tract at residues 1027-1034 is G4 motif; sequence ILFLNKQD. The residue at position 1091 (S1091) is a Phosphoserine. The G5 motif stretch occupies residues 1103–1108; it reads TCAVDT. Residue A1105 participates in GTP binding.

The protein belongs to the G-alpha family. G(s) subfamily. In terms of assembly, g proteins are composed of 3 units; alpha, beta and gamma. The alpha chain contains the guanine nucleotide binding site. Interacts through its N-terminal region with ALEX which is produced from the same locus in a different open reading frame. This interaction may inhibit its adenylyl cyclase-stimulating activity. Interacts with MAGED2.

Its subcellular location is the cell membrane. It is found in the apical cell membrane. The catalysed reaction is GTP + H2O = GDP + phosphate + H(+). Functionally, guanine nucleotide-binding proteins (G proteins) function as transducers in numerous signaling pathways controlled by G protein-coupled receptors (GPCRs). The alpha chain contains the guanine nucleotide binding site and alternates between an active, GTP-bound state and an inactive, GDP-bound state. Signaling by an activated GPCR promotes GDP release and GTP binding. The alpha subunit has a low GTPase activity that converts bound GTP to GDP, thereby terminating the signal. Both GDP release and GTP hydrolysis are modulated by numerous regulatory proteins. Signaling involves the activation of adenylyl cyclases, resulting in increased levels of the signaling molecule cAMP. GNAS functions downstream of several GPCRs, including beta-adrenergic receptors. XLas isoforms interact with the same set of receptors as Gnas isoforms. The sequence is that of Guanine nucleotide-binding protein G(s) subunit alpha isoforms XLas from Mus musculus (Mouse).